A 156-amino-acid chain; its full sequence is Pilin-like protein PilA1 (156 aa).

Residues 1-5 (MTRRG) constitute a propeptide, leader sequence. Position 6 is an N-methylleucine (L6). Residues 6-29 (LTLLELLLVLGILGVLLGLALPLL) form a helical membrane-spanning segment.

Its subcellular location is the cell inner membrane. It is found in the cell outer membrane. The protein localises to the periplasm. Functionally, plays an essential role in natural DNA transformation but is not required for pilus biogenesis. This Thermus thermophilus (strain ATCC BAA-163 / DSM 7039 / HB27) protein is Pilin-like protein PilA1 (pilA1).